We begin with the raw amino-acid sequence, 112 residues long: MYPIVRLAMVRGHRVFAARRLDKGPPEWLAYVEKSPRLRQKLPTSCRNQAGCPFLGFRRGANRWWVGRCEGNTEGVAVYDSLWGSRGNGPPMLDHKMWGEGSYGSSAEISMC.

This is an uncharacterized protein from Gallus gallus (Chicken).